The following is a 152-amino-acid chain: Erythema protein SVEP (152 aa).

The first 18 residues, 1–18, serve as a signal peptide directing secretion; that stretch reads MSITQSFFVLTLAIFGAA.

In terms of tissue distribution, salivary gland (at protein level).

The protein resides in the secreted. Salivary vasoactive peptide; induces vasodilatation in bioassay with rabbit aortic rings. This chain is Erythema protein SVEP, found in Simulium vittatum (Striped black fly).